Here is a 232-residue protein sequence, read N- to C-terminus: Phosphoribosylformylglycinamidine synthase subunit PurQ (232 aa).

The Glutamine amidotransferase type-1 domain maps to 2 to 232 (RIGVITFPGS…SVVRSTLVEA (231 aa)). Catalysis depends on C85, which acts as the Nucleophile. Residues H194 and E196 contribute to the active site.

As to quaternary structure, part of the FGAM synthase complex composed of 1 PurL, 1 PurQ and 2 PurS subunits.

The protein resides in the cytoplasm. The catalysed reaction is N(2)-formyl-N(1)-(5-phospho-beta-D-ribosyl)glycinamide + L-glutamine + ATP + H2O = 2-formamido-N(1)-(5-O-phospho-beta-D-ribosyl)acetamidine + L-glutamate + ADP + phosphate + H(+). It catalyses the reaction L-glutamine + H2O = L-glutamate + NH4(+). It functions in the pathway purine metabolism; IMP biosynthesis via de novo pathway; 5-amino-1-(5-phospho-D-ribosyl)imidazole from N(2)-formyl-N(1)-(5-phospho-D-ribosyl)glycinamide: step 1/2. Functionally, part of the phosphoribosylformylglycinamidine synthase complex involved in the purines biosynthetic pathway. Catalyzes the ATP-dependent conversion of formylglycinamide ribonucleotide (FGAR) and glutamine to yield formylglycinamidine ribonucleotide (FGAM) and glutamate. The FGAM synthase complex is composed of three subunits. PurQ produces an ammonia molecule by converting glutamine to glutamate. PurL transfers the ammonia molecule to FGAR to form FGAM in an ATP-dependent manner. PurS interacts with PurQ and PurL and is thought to assist in the transfer of the ammonia molecule from PurQ to PurL. This chain is Phosphoribosylformylglycinamidine synthase subunit PurQ, found in Leifsonia xyli subsp. xyli (strain CTCB07).